We begin with the raw amino-acid sequence, 951 residues long: MGGLEEIKNEAVDLENIPIEEVFEQLKCTREGLSSEEGNRRIEMFGPNKLEEKKESKILKFLGFMWNPLSWVMEMAAIMAIALANGGGKPPDWEDFVGIIVLLVINSTISFIEENNAGNAAAALMANLAPKTKVLRDGRWGEQEAAILVPGDIISIKLGDIVPADARLLEGDPLKIDQSALTGESLPVTKNPGDEVFSGSTCKQGEIEAVVIATGVHTFFGKAAHLVDSTNQVGHFQTVLTAIGNFCICSIAVGIVIEIIVMFPIQHRAYRSGIENLLVLLIGGIPIAMPTVLSVTMAIGSHKLSQQGAITKRMTAIEEMAGMDVLCSDKTGTLTLNKLSVDKNLVEVFTKGVDKDHVLLLAARASRTENQDAIDAAMVGMLADPKEARAGIREVHFLPFNPVDKRTALTYIDADGNWHRASKGAPEQILTLCNCKEDVKRKVHAVIDKYAERGLRSLAVARQEVPEKSKESAGGPWQFVGLLPLFDPPRHDSAETIRKALHLGVNVKMITGDQLAIGKETGRRLGMGTNMYPSSALLGQNKDASLEALPVDELIEKADGFAGVFPEHKYEIVKRLQEKKHIVGMTGDGVNDAPALKKADIGIAVADATDAARSASDIVLTEPGLSVIISAVLTSRCIFQRMKNYTIYAVSITIRIVLGFLLIALIWKYDFSPFMVLIIAILNDGTIMTISKDRVKPSPLPDSWKLKEIFATGIVLGSYLALMTVIFFWAMHKTDFFTDKFGVRSIRNSEHEMMSALYLQVSIVSQALIFVTRSRSWSFIERPGLLLVTAFMLAQLVATFLAVYANWGFARIKGIGWGWAGVIWLYSIVFYFPLDIFKFFIRFVLSGRAWDNLLENKIAFTTKKDYGREEREAQWATAQRTLHGLQPPEVASNTLFNDKSSYRELSEIAEQAKRRAEIARLRELNTLKGHVESVVKLKGLDIDTIQQNYTV.

The next 4 membrane-spanning stretches (helical) occupy residues 61–81 (FLGF…IMAI), 93–113 (WEDF…SFIE), 243–263 (IGNF…IVMF), and 277–297 (LLVL…SVTM). Catalysis depends on D329, which acts as the 4-aspartylphosphate intermediate. Residues D588 and D592 each contribute to the Mg(2+) site. A run of 6 helical transmembrane segments spans residues 647-667 (IYAV…ALIW), 671-691 (FSPF…MTIS), 709-729 (IFAT…IFFW), 752-772 (EMMS…IFVT), 785-805 (LLLV…AVYA), and 814-834 (GIGW…YFPL).

It belongs to the cation transport ATPase (P-type) (TC 3.A.3) family. Type IIIA subfamily.

Its subcellular location is the cell membrane. The enzyme catalyses ATP + H2O + H(+)(in) = ADP + phosphate + 2 H(+)(out). In terms of biological role, the plasma membrane ATPase of plants and fungi is a hydrogen ion pump. The proton gradient it generates drives the active transport of nutrients by H(+)-symport. The resulting external acidification and/or internal alkinization may mediate growth responses. The chain is Plasma membrane ATPase from Oryza sativa subsp. japonica (Rice).